A 189-amino-acid polypeptide reads, in one-letter code: Glucose-6-phosphate isomerase (189 aa).

Residues H88, H90, E97, and H136 each coordinate Fe cation.

It belongs to the archaeal-type GPI family. In terms of assembly, homodimer. Fe cation is required as a cofactor.

The protein resides in the cytoplasm. It catalyses the reaction alpha-D-glucose 6-phosphate = beta-D-fructose 6-phosphate. Its pathway is carbohydrate degradation; glycolysis; D-glyceraldehyde 3-phosphate and glycerone phosphate from D-glucose: step 2/4. Its activity is regulated as follows. Inhibited by mannose 6-phosphate, fructose 1-phosphate and fructose 1,6-bisphosphate. This is Glucose-6-phosphate isomerase (pgiA) from Pyrococcus furiosus (strain ATCC 43587 / DSM 3638 / JCM 8422 / Vc1).